The sequence spans 393 residues: Heparan sulfate glucosamine 3-O-sulfotransferase 3A1 (393 aa).

The Cytoplasmic segment spans residues 1–24 (MAPSGPTGAQPSPAEPLSRSIFRK). A helical; Signal-anchor for type II membrane protein membrane pass occupies residues 25 to 43 (FLLMLCSLLTSLYVFYCLA). The Lumenal segment spans residues 44 to 393 (ERCPPGSGPV…MTGRDFGWDG (350 aa)). The segment at 85-121 (QRRRRGRSGPGDSSDQEEQSPGLAAAPGGSGAGSSVA) is disordered. 149-153 (KGGTR) is a binding site for 3'-phosphoadenylyl sulfate. Substrate-binding positions include 171-177 (EPHFFDR) and 202-205 (KTPS). 3'-phosphoadenylyl sulfate contacts are provided by Arg-230 and Ser-238. N-linked (GlcNAc...) asparagine glycosylation is present at Asn-260. 270 to 271 (WS) contributes to the substrate binding site. An N-linked (GlcNAc...) asparagine glycan is attached at Asn-331. A disulfide bridge connects residues Cys-338 and Cys-350. 355 to 359 (KGRAH) is a binding site for 3'-phosphoadenylyl sulfate.

Belongs to the sulfotransferase 1 family.

The protein resides in the golgi apparatus membrane. It carries out the reaction alpha-D-glucosaminyl-[heparan sulfate](n) + 3'-phosphoadenylyl sulfate = 3-sulfo-alpha-D-glucosaminyl-[heparan sulfate](n) + adenosine 3',5'-bisphosphate + H(+). In terms of biological role, sulfotransferase that utilizes 3'-phospho-5'-adenylyl sulfate (PAPS) to catalyze the transfer of a sulfo group to an N-unsubstituted glucosamine linked to a 2-O-sulfo iduronic acid unit on heparan sulfate. Catalyzes the O-sulfation of glucosamine in IdoUA2S-GlcNS and also in IdoUA2S-GlcNH2. Unlike HS3ST1/3-OST-1, does not convert non-anticoagulant heparan sulfate to anticoagulant heparan sulfate. The polypeptide is Heparan sulfate glucosamine 3-O-sulfotransferase 3A1 (Hs3st3a1) (Mus musculus (Mouse)).